The following is a 105-amino-acid chain: Large ribosomal subunit protein uL24 (105 aa).

This sequence belongs to the universal ribosomal protein uL24 family. In terms of assembly, part of the 50S ribosomal subunit.

One of two assembly initiator proteins, it binds directly to the 5'-end of the 23S rRNA, where it nucleates assembly of the 50S subunit. In terms of biological role, one of the proteins that surrounds the polypeptide exit tunnel on the outside of the subunit. The sequence is that of Large ribosomal subunit protein uL24 from Xylella fastidiosa (strain M23).